The following is a 536-amino-acid chain: Protein Rep68 (536 aa).

A PV NS1-Nuc domain is found at 1-199 (MPGFYEIVIK…AQHLTHVSQT (199 aa)). A divalent metal cation-binding residues include Glu83, His90, and His92. Residues 90–92 (HMH) carry the RCR-2 motif. The active-site For nuclease activity is the Tyr156. An RCR-3 motif is present at residues 156 to 160 (YLLPK). Residues 196–211 (VSQTQEQNKENQNPNS) are compositionally biased toward polar residues. The segment at 196-216 (VSQTQEQNKENQNPNSDAPVI) is disordered. One can recognise an SF3 helicase domain in the interval 308–463 (DPQYAASVFL…LDHDFGKVTK (156 aa)). 334-341 (GPATTGKT) serves as a coordination point for ATP. A disordered region spans residues 488-536 (KGGAKKRPAPSDADISEPKRVRESVAQPSTSDAEASINYADRLARGHSL).

In terms of assembly, interacts with host TOPORS. Interacts with host KCTD5. The cofactor is a divalent metal cation.

It localises to the host nucleus. The catalysed reaction is ATP + H2O = ADP + phosphate + H(+). In terms of biological role, plays an essential role in the initiation of viral DNA synthesis. Binds specifically to an inverted terminal repeat element (ITR) on the 3' and 5' ends of the viral DNA, where it cleaves a site specifically to generate a priming site for initiation of the synthesis of a complementary strand. Also plays a role as transcriptional regulator, DNA helicase and as key factor in site-specific integration of the viral genome. Inhibits the host cell cycle G1/S and G2/M transitions. These arrests may provide essential cellular factors for viral DNA replication. This Mammalia (AAV-2) protein is Protein Rep68 (Rep68).